The primary structure comprises 133 residues: NADPH-dependent 7-cyano-7-deazaguanine reductase (133 aa).

Catalysis depends on cysteine 49, which acts as the Thioimide intermediate. Catalysis depends on aspartate 56, which acts as the Proton donor. Substrate contacts are provided by residues 71–73 (IEL) and 90–91 (HE).

This sequence belongs to the GTP cyclohydrolase I family. QueF type 1 subfamily.

It is found in the cytoplasm. The enzyme catalyses 7-aminomethyl-7-carbaguanine + 2 NADP(+) = 7-cyano-7-deazaguanine + 2 NADPH + 3 H(+). It participates in tRNA modification; tRNA-queuosine biosynthesis. In terms of biological role, catalyzes the NADPH-dependent reduction of 7-cyano-7-deazaguanine (preQ0) to 7-aminomethyl-7-deazaguanine (preQ1). This Leptospira borgpetersenii serovar Hardjo-bovis (strain JB197) protein is NADPH-dependent 7-cyano-7-deazaguanine reductase.